Consider the following 160-residue polypeptide: Ribosome maturation factor RimP (160 aa).

This sequence belongs to the RimP family.

The protein resides in the cytoplasm. Required for maturation of 30S ribosomal subunits. This Orientia tsutsugamushi (strain Boryong) (Rickettsia tsutsugamushi) protein is Ribosome maturation factor RimP.